We begin with the raw amino-acid sequence, 135 residues long: MKKVGILNSEISKIVADMGHMDTLAVVDLGFPIPQGVKKVDLVVDRGKPGLMEVIEILLRELKVERIILAKEMDEKSIQTKQELLKLIEKMNGPVEVVTVPHKEFKEMSKNVKGIIRTGADIPYSNVILVGGVIF.

His20 acts as the Proton donor in catalysis. Residues Asp28, His102, and 124-126 (YSN) each bind substrate.

The protein belongs to the RbsD / FucU family. RbsD subfamily. Homodecamer.

The protein localises to the cytoplasm. It carries out the reaction beta-D-ribopyranose = beta-D-ribofuranose. Its pathway is carbohydrate metabolism; D-ribose degradation; D-ribose 5-phosphate from beta-D-ribopyranose: step 1/2. In terms of biological role, catalyzes the interconversion of beta-pyran and beta-furan forms of D-ribose. This Thermotoga maritima (strain ATCC 43589 / DSM 3109 / JCM 10099 / NBRC 100826 / MSB8) protein is D-ribose pyranase.